We begin with the raw amino-acid sequence, 345 residues long: Beta-hexosaminidase (345 aa).

Substrate is bound by residues aspartate 60, arginine 68, arginine 132, and 162-163; that span reads KH. Histidine 175 (proton donor/acceptor) is an active-site residue. The Nucleophile role is filled by aspartate 247.

The protein belongs to the glycosyl hydrolase 3 family. NagZ subfamily.

The protein resides in the cytoplasm. It catalyses the reaction Hydrolysis of terminal non-reducing N-acetyl-D-hexosamine residues in N-acetyl-beta-D-hexosaminides.. It participates in cell wall biogenesis; peptidoglycan recycling. In terms of biological role, plays a role in peptidoglycan recycling by cleaving the terminal beta-1,4-linked N-acetylglucosamine (GlcNAc) from peptide-linked peptidoglycan fragments, giving rise to free GlcNAc, anhydro-N-acetylmuramic acid and anhydro-N-acetylmuramic acid-linked peptides. In Actinobacillus pleuropneumoniae serotype 3 (strain JL03), this protein is Beta-hexosaminidase.